A 315-amino-acid chain; its full sequence is Lipoyl synthase (315 aa).

[4Fe-4S] cluster-binding residues include Cys62, Cys67, Cys73, Cys88, Cys92, Cys95, and Ser302. The Radical SAM core domain maps to 74 to 291 (FGKGTATFMI…ETEALRMGFR (218 aa)).

The protein belongs to the radical SAM superfamily. Lipoyl synthase family. [4Fe-4S] cluster serves as cofactor.

The protein localises to the cytoplasm. The catalysed reaction is [[Fe-S] cluster scaffold protein carrying a second [4Fe-4S](2+) cluster] + N(6)-octanoyl-L-lysyl-[protein] + 2 oxidized [2Fe-2S]-[ferredoxin] + 2 S-adenosyl-L-methionine + 4 H(+) = [[Fe-S] cluster scaffold protein] + N(6)-[(R)-dihydrolipoyl]-L-lysyl-[protein] + 4 Fe(3+) + 2 hydrogen sulfide + 2 5'-deoxyadenosine + 2 L-methionine + 2 reduced [2Fe-2S]-[ferredoxin]. It functions in the pathway protein modification; protein lipoylation via endogenous pathway; protein N(6)-(lipoyl)lysine from octanoyl-[acyl-carrier-protein]: step 2/2. In terms of biological role, catalyzes the radical-mediated insertion of two sulfur atoms into the C-6 and C-8 positions of the octanoyl moiety bound to the lipoyl domains of lipoate-dependent enzymes, thereby converting the octanoylated domains into lipoylated derivatives. This chain is Lipoyl synthase, found in Azoarcus sp. (strain BH72).